Here is a 406-residue protein sequence, read N- to C-terminus: Isocitrate dehydrogenase [NADP] (406 aa).

Residues Lys72, Thr75, Thr77, and Arg82 each contribute to the NADP(+) site. 5 residues coordinate D-threo-isocitrate: Ser94, Asn96, Arg100, Glu110, and Arg132. Positions 250, 273, and 277 each coordinate Mn(2+). Residues Gly308, Thr309, Val310, His313, and Asn326 each contribute to the NADP(+) site.

This sequence belongs to the isocitrate and isopropylmalate dehydrogenases family. In terms of assembly, homodimer. The cofactor is Mg(2+). Mn(2+) serves as cofactor.

It catalyses the reaction D-threo-isocitrate + NADP(+) = 2-oxoglutarate + CO2 + NADPH. Its function is as follows. Catalyzes the oxidative decarboxylation of isocitrate to 2-oxoglutarate and carbon dioxide with the concomitant reduction of NADP(+). This Sphingobium yanoikuyae (Sphingomonas yanoikuyae) protein is Isocitrate dehydrogenase [NADP] (icd).